The chain runs to 492 residues: Probable cytochrome P450 513A3 (492 aa).

A helical transmembrane segment spans residues 1–21; sequence MTSLTLYLIIFSIILYLFVNR. Heme is bound at residue Cys-437.

This sequence belongs to the cytochrome P450 family. Heme serves as cofactor.

It is found in the membrane. The chain is Probable cytochrome P450 513A3 (cyp513A3) from Dictyostelium discoideum (Social amoeba).